The sequence spans 143 residues: Large ribosomal subunit protein mL51 (143 aa).

Residues 1 to 52 (MAALVRGLMRRVAALPQAVRSVSGGGQRHEPYRPLPITSPLAGLPRNFRVRE) constitute a mitochondrion transit peptide.

Belongs to the mitochondrion-specific ribosomal protein mL51 family. In terms of assembly, component of the mitochondrial ribosome large subunit (39S) which comprises a 16S rRNA and about 50 distinct proteins.

The protein localises to the mitochondrion. This Gallus gallus (Chicken) protein is Large ribosomal subunit protein mL51 (MRPL51).